Reading from the N-terminus, the 157-residue chain is Small ribosomal subunit protein uS7 (157 aa).

Belongs to the universal ribosomal protein uS7 family. In terms of assembly, part of the 30S ribosomal subunit. Contacts proteins S9 and S11.

Its function is as follows. One of the primary rRNA binding proteins, it binds directly to 16S rRNA where it nucleates assembly of the head domain of the 30S subunit. Is located at the subunit interface close to the decoding center, probably blocks exit of the E-site tRNA. The protein is Small ribosomal subunit protein uS7 of Marinomonas sp. (strain MWYL1).